The primary structure comprises 197 residues: Adenylate kinase isoenzyme 6 homolog FAP7 (197 aa).

The ATP site is built by Gly-17, Gly-19, Lys-20, Ser-21, and Ser-22. The segment at 38 to 61 is NMPbind; that stretch reads NISDFAKDNDCFEGYDEGRKSHIV. The interval 113-123 is LID; it reads ARGYHDSKIEE. Arg-114 contributes to the ATP binding site. The disordered stretch occupies residues 176 to 197; that stretch reads PDGVTNEYQGPRSDDEDDEDSE. Tyr-183 carries the phosphotyrosine modification. Ser-188 and Ser-196 each carry phosphoserine.

The protein belongs to the adenylate kinase family. AK6 subfamily. In terms of assembly, interacts with small ribosomal subunit protein uS11B/RPS14B. Not a structural component of 43S pre-ribosomes, but transiently interacts with them by binding to uS11/RPS14.

Its subcellular location is the cytoplasm. It localises to the nucleus. The enzyme catalyses AMP + ATP = 2 ADP. It carries out the reaction ATP + H2O = ADP + phosphate + H(+). Its function is as follows. Broad-specificity nucleoside monophosphate (NMP) kinase that catalyzes the reversible transfer of the terminal phosphate group between nucleoside triphosphates and monophosphates. Also has ATPase activity. Involved in the late cytoplasmic maturation steps of the 40S ribosomal particles, specifically 18S rRNA maturation. Required for cleavage of the 20S pre-rRNA at site D in the cytoplasm. While NMP activity is not required for ribosome maturation, ATPase activity is. Associates transiently with small ribosomal subunit protein uS11. ATP hydrolysis breaks the interaction with uS11. May temporarily remove uS11 from the ribosome to enable a conformational change of the ribosomal RNA that is needed for the final maturation step of the small ribosomal subunit. Promotes formation of the rotated state in 80S-like ribosomes, a key intermediate in translocation, thereby releasing the essential assembly factor DIM1 from pre-40S subunits. Its NMP activity may have a role in nuclear energy homeostasis. Involved in oxidative stress response. Required for POS9-dependent target gene transcription upon oxidative stress. This chain is Adenylate kinase isoenzyme 6 homolog FAP7, found in Saccharomyces cerevisiae (strain ATCC 204508 / S288c) (Baker's yeast).